The following is a 503-amino-acid chain: UDP-N-acetylmuramate--L-alanine ligase (503 aa).

120 to 126 (GTHGKTS) is a binding site for ATP.

Belongs to the MurCDEF family.

Its subcellular location is the cytoplasm. It catalyses the reaction UDP-N-acetyl-alpha-D-muramate + L-alanine + ATP = UDP-N-acetyl-alpha-D-muramoyl-L-alanine + ADP + phosphate + H(+). Its pathway is cell wall biogenesis; peptidoglycan biosynthesis. Its function is as follows. Cell wall formation. In Rhodococcus opacus (strain B4), this protein is UDP-N-acetylmuramate--L-alanine ligase.